A 342-amino-acid chain; its full sequence is Dihydroorotase (342 aa).

Zn(2+) is bound by residues histidine 13 and histidine 15. Substrate contacts are provided by residues 15 to 17 (HLR) and asparagine 41. Residues lysine 98, histidine 135, and histidine 173 each contribute to the Zn(2+) site. The residue at position 98 (lysine 98) is an N6-carboxylysine. Histidine 135 serves as a coordination point for substrate. Leucine 218 serves as a coordination point for substrate. Zn(2+) is bound at residue aspartate 246. Residue aspartate 246 is part of the active site. Substrate-binding residues include histidine 250 and alanine 262.

It belongs to the metallo-dependent hydrolases superfamily. DHOase family. Class II DHOase subfamily. As to quaternary structure, homodimer. It depends on Zn(2+) as a cofactor.

It catalyses the reaction (S)-dihydroorotate + H2O = N-carbamoyl-L-aspartate + H(+). It participates in pyrimidine metabolism; UMP biosynthesis via de novo pathway; (S)-dihydroorotate from bicarbonate: step 3/3. Functionally, catalyzes the reversible cyclization of carbamoyl aspartate to dihydroorotate. In Aliivibrio fischeri (strain ATCC 700601 / ES114) (Vibrio fischeri), this protein is Dihydroorotase.